The chain runs to 439 residues: Secreted aspartic protease LUC8 (439 aa).

The N-terminal stretch at 1–20 (MMHAFHHLAVLLIGSLPASA) is a signal peptide. 2 N-linked (GlcNAc...) asparagine glycosylation sites follow: asparagine 33 and asparagine 54. In terms of domain architecture, Peptidase A1 spans 51–435 (YLFNITVGTP…DFETQSFGLA (385 aa)). The active site involves aspartate 69. N-linked (GlcNAc...) asparagine glycosylation is found at asparagine 110, asparagine 126, asparagine 179, and asparagine 289. Residue aspartate 300 is part of the active site. N-linked (GlcNAc...) asparagine glycans are attached at residues asparagine 329 and asparagine 373. Cysteine 355 and cysteine 391 are disulfide-bonded.

This sequence belongs to the peptidase A1 family.

It localises to the secreted. Its function is as follows. Secreted aspartic protease; part of the gene cluster that mediates the biosynthesis of the mycotoxin lucilactaene and the lucilactaene-related compound NG-391 that act as cell cycle inhibitors with potent growth inhibitory activity against malarial parasites, moderate growth inhibitory activity against cancer cells, and no activity against bacteria and fungi. Within the cluster, LUC7 and LUC8 encode proteins which are not commonly involved in the biosynthesis of secondary metabolites and are not essential for lucilactaene biosynthesis. The chain is Secreted aspartic protease LUC8 from Fusarium sp.